The primary structure comprises 1255 residues: Protein diaphanous homolog 1 (1255 aa).

The residue at position 1 (Met1) is an N-acetylmethionine. Positions 1-12 are enriched in gly residues; that stretch reads MEPSGGGLGPGR. Residues 1 to 73 are disordered; sequence MEPSGGGLGP…ASYGDDPTAQ (73 aa). Phosphoserine is present on Ser22. The span at 58–73 shows a compositional bias: polar residues; that stretch reads AHRNSSASYGDDPTAQ. The 366-residue stretch at 75–440 folds into the GBD/FH3 domain; that stretch reads LQDISDEQVL…QIVLHKNGTD (366 aa). Residues 460 to 562 are a coiled coil; the sequence is IDKTKVEKSE…MASLSAVVVA (103 aa). The segment at 567 to 737 is disordered; the sequence is SSAAVPPAPP…MGVPPPPPFG (171 aa). Residues 585–736 are compositionally biased toward pro residues; sequence IPPPPPPPPL…GMGVPPPPPF (152 aa). Residues 586 to 747 enclose the FH1 domain; the sequence is PPPPPPPPLP…FGVPAAPVLP (162 aa). Thr751 carries the phosphothreonine modification. The FH2 domain occupies 752–1154; sequence PKKVYKPEVQ…MRRAKLAKEK (403 aa). Residues 1027-1179 adopt a coiled-coil conformation; that stretch reads VEKASRVSAE…IDMNAEGDET (153 aa). Residues Lys1040 and Lys1086 each carry the N6-acetyllysine modification. Phosphotyrosine is present on Tyr1104. The region spanning 1177–1205 is the DAD domain; sequence DETGVMDSLLEALQSGAAFRRKRGPRQVN. Ser1237 bears the Phosphoserine mark.

Belongs to the formin homology family. Diaphanous subfamily. As to quaternary structure, homodimer. Interacts with the GTP-bound form of RHOA. Interacts with RHOC, PFY1, MAPRE1, BAIAP2 and APC. Interacts with APC; acts as a scaffold protein for MAPRE1 and APC to stabilize microtubules and promote cell migration. Interacts with SCAI. Interacts with DCAF7, via FH2 domain. Interacts with NCDN. Interacts with OSBPL10, OSBPL2, VIM, TUBB and DYN1. Phosphorylation at Thr-751 is stimulated by cAMP and regulates stability, complex formation and mitochondrial movement. In terms of tissue distribution, widely expressed. In the organ of Corti, it is expressed at the outer and inner hair cell layers. Expression at the inner hair cell layer is restricted to inner pillar cells. Detected in cochlear spiral ganglion neurons.

Its subcellular location is the cell membrane. The protein resides in the cell projection. The protein localises to the ruffle membrane. It is found in the cytoplasm. It localises to the cytoskeleton. Its subcellular location is the microtubule organizing center. The protein resides in the centrosome. The protein localises to the spindle. It is found in the nucleus. Functionally, actin nucleation and elongation factor required for the assembly of F-actin structures, such as actin cables and stress fibers. Binds to the barbed end of the actin filament and slows down actin polymerization and depolymerization. Required for cytokinesis, and transcriptional activation of the serum response factor. DFR proteins couple Rho and Src tyrosine kinase during signaling and the regulation of actin dynamics. Functions as a scaffold protein for MAPRE1 and APC to stabilize microtubules and promote cell migration. Has neurite outgrowth promoting activity. Acts in a Rho-dependent manner to recruit PFY1 to the membrane. The MEMO1-RHOA-DIAPH1 signaling pathway plays an important role in ERBB2-dependent stabilization of microtubules at the cell cortex. It controls the localization of APC and CLASP2 to the cell membrane, via the regulation of GSK3B activity. In turn, membrane-bound APC allows the localization of the MACF1 to the cell membrane, which is required for microtubule capture and stabilization. Plays a role in the regulation of cell morphology and cytoskeletal organization. Required in the control of cell shape. Also acts as an actin nucleation and elongation factor in the nucleus by promoting nuclear actin polymerization inside the nucleus to drive serum-dependent SRF-MRTFA activity. The polypeptide is Protein diaphanous homolog 1 (Diaph1) (Mus musculus (Mouse)).